Consider the following 226-residue polypeptide: Cytidylate kinase (226 aa).

12–20 (GPSGAGKGT) provides a ligand contact to ATP.

It belongs to the cytidylate kinase family. Type 1 subfamily.

Its subcellular location is the cytoplasm. The catalysed reaction is CMP + ATP = CDP + ADP. It carries out the reaction dCMP + ATP = dCDP + ADP. The polypeptide is Cytidylate kinase (Vibrio vulnificus (strain YJ016)).